Consider the following 299-residue polypeptide: Oxygen-dependent coproporphyrinogen-III oxidase (299 aa).

Ser-92 contributes to the substrate binding site. Residues His-96 and His-106 each contribute to the a divalent metal cation site. The active-site Proton donor is His-106. Position 108–110 (Asn-108–Arg-110) interacts with substrate. A divalent metal cation is bound by residues His-145 and His-175. The tract at residues Tyr-240 to Glu-275 is important for dimerization. Gly-258–Arg-260 lines the substrate pocket.

This sequence belongs to the aerobic coproporphyrinogen-III oxidase family. Homodimer. A divalent metal cation serves as cofactor.

It localises to the cytoplasm. It carries out the reaction coproporphyrinogen III + O2 + 2 H(+) = protoporphyrinogen IX + 2 CO2 + 2 H2O. The protein operates within porphyrin-containing compound metabolism; protoporphyrin-IX biosynthesis; protoporphyrinogen-IX from coproporphyrinogen-III (O2 route): step 1/1. Its function is as follows. Involved in the heme biosynthesis. Catalyzes the aerobic oxidative decarboxylation of propionate groups of rings A and B of coproporphyrinogen-III to yield the vinyl groups in protoporphyrinogen-IX. In Salmonella choleraesuis (strain SC-B67), this protein is Oxygen-dependent coproporphyrinogen-III oxidase.